Consider the following 152-residue polypeptide: MRSLLLTVLLNLVVLLATTGAVSSNLNTAVNYASTSKIRFLSTEYNADEKRSLRGDYNNEVTKEPNTSDEERAFSISKSAEYVKMVLYGFKLGFSPRTQSKTVLRYEDKLFTALYKSGETPRSLRTKHLDKASASVFFNRFKKWYDKNVGPS.

An N-terminal signal peptide occupies residues 1-24 (MRSLLLTVLLNLVVLLATTGAVSS). The RxLR-dEER motif lies at 51-72 (RSLRGDYNNEVTKEPNTSDEER). The RGD RLK-binding motif motif lies at 54–56 (RGD). N66 carries an N-linked (GlcNAc...) asparagine glycan. The w motif stretch occupies residues 99-152 (QSKTVLRYEDKLFTALYKSGETPRSLRTKHLDKASASVFFNRFKKWYDKNVGPS).

This sequence belongs to the RxLR effector family. Interacts with host defense protein RGA2/Rpi-blb1. Interacts with host legume-type lectin receptor kinase LECRK19.

The protein localises to the secreted. It localises to the host nucleus. It is found in the host nucleolus. The protein resides in the host cell membrane. Functionally, secreted effector that acts as an elicitor of hypersensitive response (HR) specifically on plants carrying defense protein RGA2/Rpi-blb1. Enhances P.infestans colonization of plant hosts Nicotiana benthamiana and potato Solanum bulbocastanum leaves. Associates with host legume-type lectin receptor kinases and disrupts attachments between the host plasma membrane and cell wall. The sequence is that of RxLR effector protein Avrblb1 from Phytophthora infestans (strain T30-4) (Potato late blight agent).